A 496-amino-acid chain; its full sequence is RNA-binding motif protein, Y chromosome, family 1 member E (496 aa).

An RRM domain is found at 8-85 (GKLFIGGLNR…KAIKVEQAKK (78 aa)). Disordered regions lie at residues 67-348 (DMNG…PHRD) and 453-496 (DQRN…SSRY). Low complexity-rich tracts occupy residues 97–114 (PASS…SARG) and 149–159 (PVKRGPSSRSG). Over residues 175-184 (NSWMGSQGPM) the composition is skewed to polar residues. Basic and acidic residues-rich tracts occupy residues 204-214 (RNDRMSTRHDG), 242-253 (DNGHSNRDEHSS), 276-289 (AYRD…DESY), 313-326 (GYRD…HESY), 335-348 (SSRE…PHRD), and 484-496 (GESR…SSRY).

As to quaternary structure, interacts with splicing factor proteins SFRS3/SRP20, TRA2B/SFRS10, KHDRBS1/SAM68 and KHDRBS3. Testis-specific.

Its subcellular location is the nucleus. Its function is as follows. RNA-binding protein which may be involved in spermatogenesis. Required for sperm development, possibly by participating in pre-mRNA splicing in the testis. In Homo sapiens (Human), this protein is RNA-binding motif protein, Y chromosome, family 1 member E (RBMY1E).